Reading from the N-terminus, the 178-residue chain is Protein GrpE (178 aa).

Basic and acidic residues-rich tracts occupy residues 1–19 (MAKH…KEEA) and 30–42 (SPEK…ANER). Positions 1–42 (MAKHKQEEHPEDVEVKEEAVETAEQAESASPEKSELELANER) are disordered.

The protein belongs to the GrpE family. As to quaternary structure, homodimer.

Its subcellular location is the cytoplasm. Participates actively in the response to hyperosmotic and heat shock by preventing the aggregation of stress-denatured proteins, in association with DnaK and GrpE. It is the nucleotide exchange factor for DnaK and may function as a thermosensor. Unfolded proteins bind initially to DnaJ; upon interaction with the DnaJ-bound protein, DnaK hydrolyzes its bound ATP, resulting in the formation of a stable complex. GrpE releases ADP from DnaK; ATP binding to DnaK triggers the release of the substrate protein, thus completing the reaction cycle. Several rounds of ATP-dependent interactions between DnaJ, DnaK and GrpE are required for fully efficient folding. The sequence is that of Protein GrpE from Streptococcus sanguinis (strain SK36).